We begin with the raw amino-acid sequence, 138 residues long: MRTLWIMAVLLLGVEGSLIQFETLIMKVAKKSGMFSYSAYGCYCGWGGQGQPQDATDRCCFVHDCCYGKVTGCDPKMDIYTYSEENGDIVCGGDDPCRKAVCECDKAAAICFRDNKDTYDWKKYWRFPTKNCQESVPC.

Positions 1-16 (MRTLWIMAVLLLGVEG) are cleaved as a signal peptide. 7 disulfides stabilise this stretch: cysteine 42–cysteine 132, cysteine 44–cysteine 60, cysteine 59–cysteine 111, cysteine 65–cysteine 138, cysteine 66–cysteine 104, cysteine 73–cysteine 97, and cysteine 91–cysteine 102. 3 residues coordinate Ca(2+): tyrosine 43, glycine 45, and glycine 47. Histidine 63 is a catalytic residue. Aspartate 64 contributes to the Ca(2+) binding site. The active site involves aspartate 105.

The cofactor is Ca(2+). As to expression, expressed by the venom gland.

Its subcellular location is the secreted. It catalyses the reaction a 1,2-diacyl-sn-glycero-3-phosphocholine + H2O = a 1-acyl-sn-glycero-3-phosphocholine + a fatty acid + H(+). Functionally, snake venom phospholipase A2 (PLA2) that shows a moderate inhibition of ADP-induced human platelet aggregation when tested on platelet rich plasma. Exhibits high hydrolytic activities and prefers the anionic micelles (dPPC with deoxycholate) to the zwitterionic micelles (dPPC with Triton X-100). PLA2 catalyzes the calcium-dependent hydrolysis of the 2-acyl groups in 3-sn-phosphoglycerides. The protein is Acidic phospholipase A2 Ts-A3 of Trimeresurus stejnegeri (Chinese green tree viper).